A 450-amino-acid chain; its full sequence is tRNA modification GTPase MnmE (450 aa).

The (6S)-5-formyl-5,6,7,8-tetrahydrofolate site is built by arginine 23, glutamate 79, and lysine 118. In terms of domain architecture, TrmE-type G spans 214–374 (GITLILVGKP…LKEHILNKVG (161 aa)). Asparagine 224 contacts K(+). GTP contacts are provided by residues 224-229 (NAGKSS), 243-249 (TSIAGTT), and 268-271 (DTAG). Serine 228 is a binding site for Mg(2+). K(+) is bound by residues threonine 243, isoleucine 245, and threonine 248. Threonine 249 is a Mg(2+) binding site. Residue lysine 450 participates in (6S)-5-formyl-5,6,7,8-tetrahydrofolate binding.

It belongs to the TRAFAC class TrmE-Era-EngA-EngB-Septin-like GTPase superfamily. TrmE GTPase family. Homodimer. Heterotetramer of two MnmE and two MnmG subunits. K(+) serves as cofactor.

The protein localises to the cytoplasm. In terms of biological role, exhibits a very high intrinsic GTPase hydrolysis rate. Involved in the addition of a carboxymethylaminomethyl (cmnm) group at the wobble position (U34) of certain tRNAs, forming tRNA-cmnm(5)s(2)U34. The protein is tRNA modification GTPase MnmE of Francisella tularensis subsp. tularensis (strain FSC 198).